A 473-amino-acid polypeptide reads, in one-letter code: Poly(A) polymerase catalytic subunit (473 aa).

Active-site residues include D193 and D195.

It belongs to the poxviridae poly(A) polymerase catalytic subunit family. Heterodimer of a large (catalytic) subunit and a small (regulatory) subunit.

The catalysed reaction is RNA(n) + ATP = RNA(n)-3'-adenine ribonucleotide + diphosphate. Polymerase that creates the 3'-poly(A) tail of mRNA's. The protein is Poly(A) polymerase catalytic subunit (PAPL) of Crocodylus johnstoni (Australian freshwater crocodile).